The chain runs to 240 residues: Pyridoxine 5'-phosphate synthase (240 aa).

Asn7 is a binding site for 3-amino-2-oxopropyl phosphate. 9-10 lines the 1-deoxy-D-xylulose 5-phosphate pocket; it reads DH. Arg18 contributes to the 3-amino-2-oxopropyl phosphate binding site. His43 functions as the Proton acceptor in the catalytic mechanism. Arg45 and His50 together coordinate 1-deoxy-D-xylulose 5-phosphate. Glu70 functions as the Proton acceptor in the catalytic mechanism. Thr100 is a binding site for 1-deoxy-D-xylulose 5-phosphate. The active-site Proton donor is the His191. 3-amino-2-oxopropyl phosphate-binding positions include Gly192 and 213–214; that span reads GH.

It belongs to the PNP synthase family. Homooctamer; tetramer of dimers.

The protein localises to the cytoplasm. It catalyses the reaction 3-amino-2-oxopropyl phosphate + 1-deoxy-D-xylulose 5-phosphate = pyridoxine 5'-phosphate + phosphate + 2 H2O + H(+). The protein operates within cofactor biosynthesis; pyridoxine 5'-phosphate biosynthesis; pyridoxine 5'-phosphate from D-erythrose 4-phosphate: step 5/5. Functionally, catalyzes the complicated ring closure reaction between the two acyclic compounds 1-deoxy-D-xylulose-5-phosphate (DXP) and 3-amino-2-oxopropyl phosphate (1-amino-acetone-3-phosphate or AAP) to form pyridoxine 5'-phosphate (PNP) and inorganic phosphate. The protein is Pyridoxine 5'-phosphate synthase of Cyanothece sp. (strain PCC 7425 / ATCC 29141).